Here is a 264-residue protein sequence, read N- to C-terminus: Thymidylate synthase (264 aa).

Residue R21 coordinates dUMP. Position 51 (H51) interacts with (6R)-5,10-methylene-5,6,7,8-tetrahydrofolate. Residue 126 to 127 (RR) participates in dUMP binding. The active-site Nucleophile is the C146. DUMP contacts are provided by residues 166–169 (RSCD), N177, and 207–209 (HLY). A (6R)-5,10-methylene-5,6,7,8-tetrahydrofolate-binding site is contributed by D169. Residue A263 coordinates (6R)-5,10-methylene-5,6,7,8-tetrahydrofolate.

The protein belongs to the thymidylate synthase family. Bacterial-type ThyA subfamily. Homodimer.

It is found in the cytoplasm. The catalysed reaction is dUMP + (6R)-5,10-methylene-5,6,7,8-tetrahydrofolate = 7,8-dihydrofolate + dTMP. It functions in the pathway pyrimidine metabolism; dTTP biosynthesis. Functionally, catalyzes the reductive methylation of 2'-deoxyuridine-5'-monophosphate (dUMP) to 2'-deoxythymidine-5'-monophosphate (dTMP) while utilizing 5,10-methylenetetrahydrofolate (mTHF) as the methyl donor and reductant in the reaction, yielding dihydrofolate (DHF) as a by-product. This enzymatic reaction provides an intracellular de novo source of dTMP, an essential precursor for DNA biosynthesis. In Shewanella baltica (strain OS185), this protein is Thymidylate synthase.